The primary structure comprises 502 residues: 4,4'-diapophytoene desaturase (4,4'-diaponeurosporene-forming) (502 aa).

5 to 17 (VIGAGVTGLAAAA) provides a ligand contact to FAD.

The protein belongs to the carotenoid/retinoid oxidoreductase family. CrtN subfamily.

It carries out the reaction 15-cis-4,4'-diapophytoene + 3 FAD + 3 H(+) = all-trans-4,4'-diaponeurosporene + 3 FADH2. It participates in carotenoid biosynthesis; staphyloxanthin biosynthesis; staphyloxanthin from farnesyl diphosphate: step 2/5. Functionally, involved in the biosynthesis of the yellow-orange carotenoid staphyloxanthin, which plays a role in the virulence via its protective function against oxidative stress. Catalyzes three successive dehydrogenation reactions that lead to the introduction of three double bonds into 4,4'-diapophytoene (dehydrosqualene), with 4,4'-diapophytofluene and 4,4'-diapo-zeta-carotene as intermediates, and 4,4'-diaponeurosporene (the major deep-yellow pigment in staphylococci strains) as the end product. The chain is 4,4'-diapophytoene desaturase (4,4'-diaponeurosporene-forming) from Staphylococcus aureus (strain bovine RF122 / ET3-1).